Reading from the N-terminus, the 67-residue chain is Large ribosomal subunit protein uL29c (67 aa).

It belongs to the universal ribosomal protein uL29 family.

The protein localises to the plastid. The protein resides in the chloroplast. The chain is Large ribosomal subunit protein uL29c (rpl29) from Porphyra purpurea (Red seaweed).